Consider the following 417-residue polypeptide: MSSLNKLAIDQLNLAGKRVLIRVDFNVPLKDGKITNNQRIAAAVPTIQHALSNGAKSVVLMSHLGRPDGRRQDKYTLKPVAEELKALLKKDVLFLDDCVGSEVEAACADPAPGSVILLENLRYHLEEEGKGVDASGAKVKADSAAVKKFRESLTKLGDIYVNDAFGTAHRAHSSMVGVEHSQRASGFLLKNELSYFSKALDNPARPFLAILGGAKVADKIQLIKNLLDKVNEMIIGGGMAYTFLKVAQGVKIGNSLYDEEGAKIVNELLEAAKAKGVQIHLPVDFVIADKFAEDATSKTVTAEEGVPDGHMGLDVGPESSKIFAAAIQRAKTIVWNGPAGVFEFDKFATGTKSLMDEVVKATAAGAITIIGGGDTATAAKKYNTEDKVSHVSTGGGASLELLEGKVLPGVDALSPAQ.

Positions 23, 24, 25, 26, 38, 39, 62, 63, 65, 66, 121, 122, 169, and 170 each coordinate (2R)-3-phosphoglycerate. Gly213 is a binding site for ADP. Residue Gly213 coordinates CDP. Residues Ala214 and Lys215 each coordinate AMP. Residue Ala214 coordinates ATP. Ala214 contacts Mg(2+). Residues Ala217 and Asp218 each coordinate Mg(2+). Asp218 serves as a coordination point for CDP. Lys219 contributes to the AMP binding site. ATP is bound at residue Lys219. Residue Gly237 coordinates ADP. Residue Gly237 coordinates CDP. AMP is bound by residues Gly238 and Gly312. Residues Gly238 and Gly312 each coordinate ATP. 3 residues coordinate CDP: Gly337, Ala339, and Phe342. Phe342 contributes to the ADP binding site. Glu343 lines the AMP pocket. Glu343, Asp374, and Thr375 together coordinate ATP. Asp374 provides a ligand contact to Mg(2+).

It belongs to the phosphoglycerate kinase family. Monomer. Mg(2+) is required as a cofactor.

Its subcellular location is the cytoplasm. It carries out the reaction (2R)-3-phosphoglycerate + ATP = (2R)-3-phospho-glyceroyl phosphate + ADP. Its pathway is carbohydrate degradation; glycolysis; pyruvate from D-glyceraldehyde 3-phosphate: step 2/5. This is Probable phosphoglycerate kinase (pgk-1) from Caenorhabditis elegans.